Here is a 490-residue protein sequence, read N- to C-terminus: GTPase Der (490 aa).

2 EngA-type G domains span residues 3 to 166 and 203 to 376; these read PVVA…MEDL and IKLA…DSST. Residues 9-16, 56-60, 118-121, 209-216, 256-260, and 321-324 each bind GTP; these read GRPNVGKS, DTGGI, NKTD, DTAGV, and NKWD. Positions 377-461 constitute a KH-like domain; it reads RRVGTSMLTR…PIRIQFKEGE (85 aa).

It belongs to the TRAFAC class TrmE-Era-EngA-EngB-Septin-like GTPase superfamily. EngA (Der) GTPase family. Associates with the 50S ribosomal subunit.

GTPase that plays an essential role in the late steps of ribosome biogenesis. The polypeptide is GTPase Der (Escherichia coli O7:K1 (strain IAI39 / ExPEC)).